A 162-amino-acid polypeptide reads, in one-letter code: Proepiregulin (162 aa).

The N-terminal stretch at 1-22 (METLPASWVLTLLCLGSHLLQA) is a signal peptide. The propeptide occupies 23 to 55 (VISTTVIPSCIPGESEDNCTALVQMEDDPRVAQ). An N-linked (GlcNAc...) asparagine glycan is attached at Asn40. Over 53 to 112 (VAQVQITKCSSDMDGYCLHGQCIYLVDMREKFCRCEVGYTGLRCEHFFLTVHQPLSKEYV) the chain is Extracellular. Residues 57–97 (QITKCSSDMDGYCLHGQCIYLVDMREKFCRCEVGYTGLRCE) enclose the EGF-like domain. Cystine bridges form between Cys61–Cys74, Cys69–Cys85, and Cys87–Cys96. Positions 102–162 (TVHQPLSKEY…TSGDPVLPQV (61 aa)) are cleaved as a propeptide — removed in mature form. Residues 113 to 133 (ALTVILIFLFLIITAGCIYYF) traverse the membrane as a helical segment. Residues 134-162 (CRWYKNRKSKKSREEYERVTSGDPVLPQV) lie on the Cytoplasmic side of the membrane.

As to quaternary structure, interacts with EGFR and ERBB4.

The protein resides in the secreted. It is found in the extracellular space. The protein localises to the cell membrane. Its function is as follows. Ligand of the EGF receptor/EGFR and ERBB4. Stimulates EGFR and ERBB4 tyrosine phosphorylation. Contributes to inflammation, wound healing, tissue repair, and oocyte maturation by regulating angiogenesis and vascular remodeling and by stimulating cell proliferation. This Mus musculus (Mouse) protein is Proepiregulin (Ereg).